Consider the following 272-residue polypeptide: Putative phosphoenolpyruvate synthase regulatory protein (272 aa).

Residue 152 to 159 (GVSRSGKT) coordinates ADP.

It belongs to the pyruvate, phosphate/water dikinase regulatory protein family. PSRP subfamily.

It carries out the reaction [pyruvate, water dikinase] + ADP = [pyruvate, water dikinase]-phosphate + AMP + H(+). The catalysed reaction is [pyruvate, water dikinase]-phosphate + phosphate + H(+) = [pyruvate, water dikinase] + diphosphate. Its function is as follows. Bifunctional serine/threonine kinase and phosphorylase involved in the regulation of the phosphoenolpyruvate synthase (PEPS) by catalyzing its phosphorylation/dephosphorylation. The protein is Putative phosphoenolpyruvate synthase regulatory protein of Hahella chejuensis (strain KCTC 2396).